Here is a 2193-residue protein sequence, read N- to C-terminus: Protein sidekick-1 (2193 aa).

Positions 1–23 (MARARPSVAGGGVAAPPERAGPG) are enriched in low complexity. Positions 1-56 (MARARPSVAGGGVAAPPERAGPGRPRRSRTGHHCDPECPGLRAAPRTPGPGAGRRA) are disordered. Ig-like C2-type domains follow at residues 86 to 168 (PYFK…SEIQ), 173 to 259 (GNFM…SPFI), 275 to 363 (PIIV…AFLS), 368 to 458 (PYFT…LDVT), and 462 to 551 (PAFT…AMLT). An intrachain disulfide couples C108 to C151. Residues N123, N253, and N283 are each glycosylated (N-linked (GlcNAc...) asparagine). 3 disulfides stabilise this stretch: C297–C344, C390–C440, and C483–C535. N532, N545, and N554 each carry an N-linked (GlcNAc...) asparagine glycan. Positions 556-645 (TSIVHPPEDR…GSDSRTARLE (90 aa)) constitute an Ig-like C2-type 6 domain. An intrachain disulfide couples C577 to C629. 13 consecutive Fibronectin type-III domains span residues 652-748 (PPQN…LPEE), 753-849 (PPKN…TLQG), 854-952 (PPQN…THED), 956-1050 (AVGH…VPPD), 1054-1153 (APSN…TLQA), 1158-1256 (APTS…TRES), 1261-1358 (APEN…TKDD), 1362-1456 (PPVR…TEKR), 1461-1558 (PPRE…TLQD), 1563-1681 (PPGS…VGEA), 1686-1782 (APQN…THQA), 1786-1881 (PPSF…AGPA), and 1884-1982 (SPGS…SAQA). N-linked (GlcNAc...) asparagine glycans are attached at residues N764, N803, N864, N997, and N1006. N-linked (GlcNAc...) asparagine glycans are attached at residues N1264 and N1315. N-linked (GlcNAc...) asparagine glycosylation is found at N1636, N1730, N1801, and N1875. The helical transmembrane segment at 1992–2012 (FLLVMALSSLLLILLVVFVLV) threads the bilayer. At 2013–2193 (LHGQSKKYKS…APLTGFSSFV (181 aa)) the chain is on the cytoplasmic side. Residues 2057–2080 (STFSKKNGTRSPPRPSPGGLHYSD) are disordered. Residues 2187 to 2193 (TGFSSFV) carry the PDZ-binding motif.

This sequence belongs to the sidekick family. As to quaternary structure, homodimer; mediates homophilic interactions to promote cell adhesion. Interacts (via PDZ-binding motif) with MAGI1, MAGI2, DLG2, DLG3 and DLG4. Does not mediate homophilic interactions. In terms of tissue distribution, expressed by non-overlapping subsets of retinal neurons. Sdk1 and Sdk2 are expressed in non-overlapping subsets of interneurons and retinal ganglion cells (RGCs) that form synapses in distinct inner plexiform layer (IPL) sublaminae (at protein level).

It is found in the cell membrane. The protein localises to the synapse. In terms of biological role, adhesion molecule that promotes lamina-specific synaptic connections in the retina. Expressed in specific subsets of interneurons and retinal ganglion cells (RGCs) and promotes synaptic connectivity via homophilic interactions. The polypeptide is Protein sidekick-1 (Mus musculus (Mouse)).